Here is an 811-residue protein sequence, read N- to C-terminus: TLR4 interactor with leucine rich repeats (811 aa).

The N-terminal stretch at 1–25 (MEAARALRLLLVVCGCLALPPLAEP) is a signal peptide. The region spanning 26-57 (VCPERCDCQHPQHLLCTNRGLRVVPKTSSLPS) is the LRRNT domain. The Extracellular segment spans residues 26 to 696 (VCPERCDCQH…AGSRGGVDYQ (671 aa)). 12 LRR repeats span residues 61–81 (VLTY…DFHR), 84–105 (QLRR…TFEK), 108–129 (RLEE…TLAP), 132–153 (KLRI…SFEG), 156–177 (SLVK…VFAP), 180–201 (NLLY…AFAQ), 204–223 (KLRF…RHAA), 230–251 (SLSS…IFQH), 254–275 (RLGL…AFWG), 278–299 (ALRE…LLEP), 302–323 (SLEA…TFGH), and 326–347 (RLRE…IFAA). An N-linked (GlcNAc...) asparagine glycan is attached at N73. A glycan (N-linked (GlcNAc...) asparagine) is linked at N209. Residues 359-416 (NGWTCDCRLRGLKRWMGDWHSQGRLLTVFVQCRHPPALRGKYLDYLDDQQLQNGSCAD) form the LRRCT domain. A disordered region spans residues 484-549 (LSRRGPGLQQ…PSPAGDPWQR (66 aa)). 2 stretches are compositionally biased toward low complexity: residues 492–508 (QQPS…APQS) and 530–544 (PTPT…SPAG). The N-linked (GlcNAc...) asparagine glycan is linked to N589. The helical transmembrane segment at 697–717 (LLTLALLTVNALLVLLALAAW) threads the bilayer. The Cytoplasmic segment spans residues 718–811 (ASRWLRRKLR…EDRLLQRFAD (94 aa)). S798 is modified (phosphoserine).

As to quaternary structure, belongs to the lipopolysaccharide (LPS) receptor, a multi-protein complex containing at least CD14, MD-2 and TLR4. Interacts with TLR4; this interaction is greatly enhanced by LPS stimulation. Interacts with LPS. Post-translationally, N-glycolysaled. In terms of tissue distribution, highly expressed in the brain, ovary, small intestine and spleen.

The protein resides in the membrane. Functionally, component of the TLR4 signaling complex. Mediates the innate immune response to bacterial lipopolysaccharide (LPS) leading to cytokine secretion. In Homo sapiens (Human), this protein is TLR4 interactor with leucine rich repeats (TRIL).